A 602-amino-acid polypeptide reads, in one-letter code: Glutamine--fructose-6-phosphate aminotransferase [isomerizing] (602 aa).

Cysteine 2 acts as the Nucleophile; for GATase activity in catalysis. A Glutamine amidotransferase type-2 domain is found at 2–217 (CGIVGVVGNT…DQELVIVKAD (216 aa)). The segment at 67-87 (IGHTRWATHGKPTEDNAHPHR) is disordered. The span at 77–87 (KPTEDNAHPHR) shows a compositional bias: basic and acidic residues. 2 consecutive SIS domains span residues 283-422 (IIKA…ANGN) and 455-592 (VREL…VDKP). Lysine 597 acts as the For Fru-6P isomerization activity in catalysis.

Homodimer.

It localises to the cytoplasm. It carries out the reaction D-fructose 6-phosphate + L-glutamine = D-glucosamine 6-phosphate + L-glutamate. Its function is as follows. Catalyzes the first step in hexosamine metabolism, converting fructose-6P into glucosamine-6P using glutamine as a nitrogen source. This Streptococcus pneumoniae serotype 4 (strain ATCC BAA-334 / TIGR4) protein is Glutamine--fructose-6-phosphate aminotransferase [isomerizing].